A 441-amino-acid polypeptide reads, in one-letter code: NADH-quinone oxidoreductase subunit D (441 aa).

The protein belongs to the complex I 49 kDa subunit family. As to quaternary structure, NDH-1 is composed of 14 different subunits. Subunits NuoB, C, D, E, F, and G constitute the peripheral sector of the complex.

The protein localises to the cell membrane. It carries out the reaction a quinone + NADH + 5 H(+)(in) = a quinol + NAD(+) + 4 H(+)(out). Its function is as follows. NDH-1 shuttles electrons from NADH, via FMN and iron-sulfur (Fe-S) centers, to quinones in the respiratory chain. The immediate electron acceptor for the enzyme in this species is believed to be a menaquinone. Couples the redox reaction to proton translocation (for every two electrons transferred, four hydrogen ions are translocated across the cytoplasmic membrane), and thus conserves the redox energy in a proton gradient. This chain is NADH-quinone oxidoreductase subunit D, found in Mycobacterium avium (strain 104).